A 97-amino-acid chain; its full sequence is Aspartyl/glutamyl-tRNA(Asn/Gln) amidotransferase subunit C (97 aa).

It belongs to the GatC family. As to quaternary structure, heterotrimer of A, B and C subunits.

The catalysed reaction is L-glutamyl-tRNA(Gln) + L-glutamine + ATP + H2O = L-glutaminyl-tRNA(Gln) + L-glutamate + ADP + phosphate + H(+). It carries out the reaction L-aspartyl-tRNA(Asn) + L-glutamine + ATP + H2O = L-asparaginyl-tRNA(Asn) + L-glutamate + ADP + phosphate + 2 H(+). In terms of biological role, allows the formation of correctly charged Asn-tRNA(Asn) or Gln-tRNA(Gln) through the transamidation of misacylated Asp-tRNA(Asn) or Glu-tRNA(Gln) in organisms which lack either or both of asparaginyl-tRNA or glutaminyl-tRNA synthetases. The reaction takes place in the presence of glutamine and ATP through an activated phospho-Asp-tRNA(Asn) or phospho-Glu-tRNA(Gln). This Thermosynechococcus vestitus (strain NIES-2133 / IAM M-273 / BP-1) protein is Aspartyl/glutamyl-tRNA(Asn/Gln) amidotransferase subunit C.